The primary structure comprises 233 residues: Glyceraldehyde 3-phosphate phosphatase (233 aa).

This sequence belongs to the HAD-like hydrolase superfamily. Requires Mg(2+) as cofactor.

In terms of biological role, catalyzes the dephosphorylation of D,L-glyceraldehyde 3-phosphate in vitro. This Methanopyrus kandleri (strain AV19 / DSM 6324 / JCM 9639 / NBRC 100938) protein is Glyceraldehyde 3-phosphate phosphatase.